The sequence spans 287 residues: Glycine--tRNA ligase alpha subunit (287 aa).

The protein belongs to the class-II aminoacyl-tRNA synthetase family. In terms of assembly, tetramer of two alpha and two beta subunits.

It localises to the cytoplasm. It catalyses the reaction tRNA(Gly) + glycine + ATP = glycyl-tRNA(Gly) + AMP + diphosphate. This Campylobacter jejuni subsp. jejuni serotype O:6 (strain 81116 / NCTC 11828) protein is Glycine--tRNA ligase alpha subunit.